Reading from the N-terminus, the 145-residue chain is MTQTIFVLNGPNLNMLGKREPGIYGGKTLKDIEADCKVAGRELGFDIDFRQSNHEGTLVDWFHEADEKAVGVAFNAGAYTHTSVALHDAIRAISIPVVELHISNVHAREEFRHKSMIAPACKGVICGFGPHSYILALHALKNITA.

Tyr24 serves as the catalytic Proton acceptor. Positions 75, 81, and 88 each coordinate substrate. His101 serves as the catalytic Proton donor. Substrate contacts are provided by residues 102–103 (IS) and Arg112.

Belongs to the type-II 3-dehydroquinase family. Homododecamer.

It catalyses the reaction 3-dehydroquinate = 3-dehydroshikimate + H2O. It participates in metabolic intermediate biosynthesis; chorismate biosynthesis; chorismate from D-erythrose 4-phosphate and phosphoenolpyruvate: step 3/7. Catalyzes a trans-dehydration via an enolate intermediate. This chain is 3-dehydroquinate dehydratase, found in Rhizobium etli (strain CIAT 652).